The sequence spans 641 residues: Sodium-dependent nutrient amino acid transporter 1 (641 aa).

The tract at residues 1–36 is disordered; that stretch reads MELKGVQPSNGSANGNGTTNAASTEKTDAEKHTPER. The Cytoplasmic portion of the chain corresponds to 1-38; the sequence is MELKGVQPSNGSANGNGTTNAASTEKTDAEKHTPERTN. Positions 9–24 are enriched in low complexity; it reads SNGSANGNGTTNAAST. Positions 25–35 are enriched in basic and acidic residues; that stretch reads EKTDAEKHTPE. 3 helical membrane passes run 39 to 59, 72 to 92, and 109 to 129; these read WGNGLEFLMSCISVSVGLGNV, GAFLIPYIIVLFLIGKPMYYL, and SVVPGFVGVGYGQAFGTICII. N-linked (GlcNAc...) asparagine glycans are attached at residues N183 and N188. Helical transmembrane passes span 229–249, 258–278, 307–327, 341–361, 401–421, 441–461, 474–494, 516–536, and 552–572; these read PDWKLTLALLAAWVVIFLVIM, AAYFLALFPYVVLFVLLIRAV, AVVQCFFSLAVGSGPIIMFAS, IVTTLDTLTSLLGGITIFAIL, LFSVLFFFMLFVLGIGSIVAL, VALITSACGFLMGLVYVTPGG, TYVVFILAIFELAGIVWVYGL, CWSFFTPVMMIIIFIYSMVTI, and IAGWLLFAIGAAQFPLWGLWY.

Belongs to the sodium:neurotransmitter symporter (SNF) (TC 2.A.22) family.

The protein localises to the membrane. Its function is as follows. Unusual broad substrate spectrum amino acid:sodium cotransporter that promotes absorption of the D isomers of essential amino acids. Neutral amino acids are the preferred substrates, especially methionine and phenylalanine. In Drosophila erecta (Fruit fly), this protein is Sodium-dependent nutrient amino acid transporter 1.